Here is a 414-residue protein sequence, read N- to C-terminus: Tyrosine--tRNA ligase (414 aa).

Y38 is an L-tyrosine binding site. The 'HIGH' region motif lies at 43–52 (PTATSLHLGN). Residues Y165 and Q169 each contribute to the L-tyrosine site. Positions 228–232 (KFGKS) match the 'KMSKS' region motif. K231 is a binding site for ATP. In terms of domain architecture, S4 RNA-binding spans 349-414 (FNANQIIDLG…KKYFFIIELI (66 aa)).

The protein belongs to the class-I aminoacyl-tRNA synthetase family. TyrS type 1 subfamily. As to quaternary structure, homodimer.

It is found in the cytoplasm. The enzyme catalyses tRNA(Tyr) + L-tyrosine + ATP = L-tyrosyl-tRNA(Tyr) + AMP + diphosphate + H(+). Its function is as follows. Catalyzes the attachment of tyrosine to tRNA(Tyr) in a two-step reaction: tyrosine is first activated by ATP to form Tyr-AMP and then transferred to the acceptor end of tRNA(Tyr). The sequence is that of Tyrosine--tRNA ligase from Mesomycoplasma hyopneumoniae (strain 232) (Mycoplasma hyopneumoniae).